Consider the following 617-residue polypeptide: MLLGKFLLVASFILPIAYTWTGATIRNHPADVVAARNKITSRSVARSEPTNSYIRPCYFTNWAQYRQGRAKFVPEDYTPGLCTHILFAFGWMNADYTVRAYDPADLPNDWAGEGMYRRVNKLKVTDTQLKTLLSFGGWSFGTALFQGMAASSASRKVFIDSAITFVRTWGFDGIDIDWEYPSGATDMANYVALVKELKAACESEAGSTGKDRLLVTAAVAAGPATIDAGYDIPNLAPNFDFILLMSYDFFGAWASLVGFNSPLYATTELPAEWNGWNVDSSARYWNQKGMPKEKIIVGMPTYGRGWTLNNASAINPGTSGSPAKITQYVQEAGVGAYFEFCEMLANGATRYWDSQSQVPYLVQGNQWWSYDDEESFANKMAYVKREGYGGAFVWTLDFDDFNAGCSNSNGQLYPLISVIAKELGGVIIPKKGGVTTAPTTVATTVTTGRPPMTSAVTTTTAATTTTTRAATTTTASNTNVCSGKSDGFYPNSNNCGLFVLCLSSKSYSMSCPSGLQYSASLKYCTTSTASGCSVTTTRAPTTTTKSAPTVTTTTRAPTTTTPAFKCTKDGFFGVPSDCLKFIRCVNGISYNFECPNGLSFHADTMMCDRPDPSKCAK.

One can recognise a GH18 domain in the interval 53–426 (YIRPCYFTNW…SVIAKELGGV (374 aa)). An intrachain disulfide couples Cys-57 to Cys-82. Residues 109 to 110 (DW) and 136 to 139 (GGWS) contribute to the chitin site. Glu-179 serves as the catalytic Proton donor. Chitin is bound by residues Tyr-180 and 245–248 (MSYD). The N-linked (GlcNAc...) asparagine glycan is linked to Asn-310. Trp-394 provides a ligand contact to chitin. Chitin-binding type-2 domains are found at residues 478–534 (TNVC…GCSV) and 563–617 (AFKC…KCAK). 2 disulfide bridges follow: Cys-511–Cys-524 and Cys-594–Cys-607.

This sequence belongs to the glycosyl hydrolase 18 family. Chitinase class II subfamily.

It carries out the reaction Random endo-hydrolysis of N-acetyl-beta-D-glucosaminide (1-&gt;4)-beta-linkages in chitin and chitodextrins.. In Caenorhabditis elegans, this protein is Probable endochitinase (cht-1).